We begin with the raw amino-acid sequence, 111 residues long: Cell cycle protein GpsB (111 aa).

Residues 38–72 are a coiled coil; sequence IKDYEAFHKEFDQLKQQNARLKRELEEQKVAATQV.

This sequence belongs to the GpsB family. As to quaternary structure, forms polymers through the coiled coil domains. Interacts with PBP1, MreC and EzrA.

The protein resides in the cytoplasm. Divisome component that associates with the complex late in its assembly, after the Z-ring is formed, and is dependent on DivIC and PBP2B for its recruitment to the divisome. Together with EzrA, is a key component of the system that regulates PBP1 localization during cell cycle progression. Its main role could be the removal of PBP1 from the cell pole after pole maturation is completed. Also contributes to the recruitment of PBP1 to the division complex. Not essential for septum formation. The protein is Cell cycle protein GpsB of Bacillus mycoides (strain KBAB4) (Bacillus weihenstephanensis).